A 346-amino-acid polypeptide reads, in one-letter code: Holliday junction branch migration complex subunit RuvB (346 aa).

The span at Met-1 to Ala-11 shows a compositional bias: polar residues. Residues Met-1–Ala-20 are disordered. The tract at residues Met-1–Tyr-183 is large ATPase domain (RuvB-L). ATP-binding positions include Ile-22, Arg-23, Gly-64, Lys-67, Thr-68, Thr-69, Glu-130–Phe-132, Arg-173, Tyr-183, and Arg-220. A Mg(2+)-binding site is contributed by Thr-68. Positions Ser-184–Lys-254 are small ATPAse domain (RuvB-S). Residues Pro-257–Phe-346 are head domain (RuvB-H). Residues Arg-293, Arg-312, and Arg-317 each contribute to the DNA site.

This sequence belongs to the RuvB family. In terms of assembly, homohexamer. Forms an RuvA(8)-RuvB(12)-Holliday junction (HJ) complex. HJ DNA is sandwiched between 2 RuvA tetramers; dsDNA enters through RuvA and exits via RuvB. An RuvB hexamer assembles on each DNA strand where it exits the tetramer. Each RuvB hexamer is contacted by two RuvA subunits (via domain III) on 2 adjacent RuvB subunits; this complex drives branch migration. In the full resolvosome a probable DNA-RuvA(4)-RuvB(12)-RuvC(2) complex forms which resolves the HJ.

Its subcellular location is the cytoplasm. It carries out the reaction ATP + H2O = ADP + phosphate + H(+). In terms of biological role, the RuvA-RuvB-RuvC complex processes Holliday junction (HJ) DNA during genetic recombination and DNA repair, while the RuvA-RuvB complex plays an important role in the rescue of blocked DNA replication forks via replication fork reversal (RFR). RuvA specifically binds to HJ cruciform DNA, conferring on it an open structure. The RuvB hexamer acts as an ATP-dependent pump, pulling dsDNA into and through the RuvAB complex. RuvB forms 2 homohexamers on either side of HJ DNA bound by 1 or 2 RuvA tetramers; 4 subunits per hexamer contact DNA at a time. Coordinated motions by a converter formed by DNA-disengaged RuvB subunits stimulates ATP hydrolysis and nucleotide exchange. Immobilization of the converter enables RuvB to convert the ATP-contained energy into a lever motion, pulling 2 nucleotides of DNA out of the RuvA tetramer per ATP hydrolyzed, thus driving DNA branch migration. The RuvB motors rotate together with the DNA substrate, which together with the progressing nucleotide cycle form the mechanistic basis for DNA recombination by continuous HJ branch migration. Branch migration allows RuvC to scan DNA until it finds its consensus sequence, where it cleaves and resolves cruciform DNA. This Xanthomonas campestris pv. campestris (strain 8004) protein is Holliday junction branch migration complex subunit RuvB.